Reading from the N-terminus, the 602-residue chain is Elongation factor 4 (602 aa).

The region spanning 7-189 (KYIRNFCIIA…KIVDMIPCPE (183 aa)) is the tr-type G domain. GTP is bound by residues 19 to 24 (DHGKST) and 136 to 139 (NKID).

This sequence belongs to the TRAFAC class translation factor GTPase superfamily. Classic translation factor GTPase family. LepA subfamily.

It localises to the cell membrane. The enzyme catalyses GTP + H2O = GDP + phosphate + H(+). Functionally, required for accurate and efficient protein synthesis under certain stress conditions. May act as a fidelity factor of the translation reaction, by catalyzing a one-codon backward translocation of tRNAs on improperly translocated ribosomes. Back-translocation proceeds from a post-translocation (POST) complex to a pre-translocation (PRE) complex, thus giving elongation factor G a second chance to translocate the tRNAs correctly. Binds to ribosomes in a GTP-dependent manner. The polypeptide is Elongation factor 4 (Ruminiclostridium cellulolyticum (strain ATCC 35319 / DSM 5812 / JCM 6584 / H10) (Clostridium cellulolyticum)).